An 880-amino-acid polypeptide reads, in one-letter code: Potassium transport protein 2 (880 aa).

A glycan (N-linked (GlcNAc...) asparagine) is linked at N9. A run of 2 helical transmembrane segments spans residues 28–48 and 84–104; these read FVQD…LYGS and TILL…LTLF. Residues 157 to 182 are disordered; it reads MHRPVAPETKAEEAEHQENEKHHRHH. Residues 165–177 show a composition bias toward basic and acidic residues; sequence TKAEEAEHQENEK. N-linked (GlcNAc...) asparagine glycans are attached at residues N239, N283, N293, N294, N321, N443, and N460. Positions 289 to 315 are enriched in polar residues; sequence HHLDNNSSISSHNPSLETANDGNQETV. A disordered region spans residues 289–344; it reads HHLDNNSSISSHNPSLETANDGNQETVSSSNSNYSTTRVDNDPHVASYSPQNSNFD. Residues 316 to 325 show a composition bias toward low complexity; that stretch reads SSSNSNYSTT. 6 helical membrane-spanning segments follow: residues 494–514, 571–591, 625–645, 684–704, 756–776, and 787–807; these read ILVV…LIFI, LIFL…WIMI, WVLF…FMVL, IAPA…YPIA, QLSH…IVEG, and FTLF…GLSL. The disordered stretch occupies residues 857-880; sequence REEEDYMRRHGKKNTNRADPVPSS.

The protein belongs to the TrkH potassium transport family.

The protein localises to the cell membrane. Together with TRK1, defines the major, high-affinity potassium influx transport system. Involved in maintenance of the proper sodium/potassium ratio in the cell and in regulating the plasma membrane potential. The sequence is that of Potassium transport protein 2 (trk2) from Schizosaccharomyces pombe (strain 972 / ATCC 24843) (Fission yeast).